The sequence spans 345 residues: Eukaryotic translation initiation factor 3 subunit F (345 aa).

The region spanning 30–166 (VVIQPQAIFS…TRAYISAPVG (137 aa)) is the MPN domain. Residues 310-345 (EGASAEAGAQRGQRGGKGGRGGQQRTQERASEEVRA) form a disordered region. The span at 312 to 321 (ASAEAGAQRG) shows a compositional bias: low complexity. Residues 322–331 (QRGGKGGRGG) show a composition bias toward gly residues. A compositionally biased stretch (basic and acidic residues) spans 335-345 (TQERASEEVRA).

This sequence belongs to the eIF-3 subunit F family. Component of the eukaryotic translation initiation factor 3 (eIF-3) complex.

The protein localises to the cytoplasm. Its function is as follows. Component of the eukaryotic translation initiation factor 3 (eIF-3) complex, which is involved in protein synthesis of a specialized repertoire of mRNAs and, together with other initiation factors, stimulates binding of mRNA and methionyl-tRNAi to the 40S ribosome. The eIF-3 complex specifically targets and initiates translation of a subset of mRNAs involved in cell proliferation. In Aspergillus fumigatus (strain CBS 144.89 / FGSC A1163 / CEA10) (Neosartorya fumigata), this protein is Eukaryotic translation initiation factor 3 subunit F.